The sequence spans 380 residues: Cytochrome b (380 aa).

4 helical membrane passes run 34-54 (FGSL…LLAA), 78-99 (WLIR…YLHI), 114-134 (WNTG…GYVL), and 179-199 (FFTL…IHLT). Residues His84 and His98 each contribute to the heme b site. Heme b-binding residues include His183 and His197. An a ubiquinone-binding site is contributed by His202. 4 consecutive transmembrane segments (helical) span residues 227–247 (LKDT…ALFS), 289–309 (LGGV…PLLH), 321–341 (LFQL…WVGS), and 348–368 (FIII…ILFP).

Belongs to the cytochrome b family. In terms of assembly, the cytochrome bc1 complex contains 11 subunits: 3 respiratory subunits (MT-CYB, CYC1 and UQCRFS1), 2 core proteins (UQCRC1 and UQCRC2) and 6 low-molecular weight proteins (UQCRH/QCR6, UQCRB/QCR7, UQCRQ/QCR8, UQCR10/QCR9, UQCR11/QCR10 and a cleavage product of UQCRFS1). This cytochrome bc1 complex then forms a dimer. Heme b is required as a cofactor.

It localises to the mitochondrion inner membrane. Functionally, component of the ubiquinol-cytochrome c reductase complex (complex III or cytochrome b-c1 complex) that is part of the mitochondrial respiratory chain. The b-c1 complex mediates electron transfer from ubiquinol to cytochrome c. Contributes to the generation of a proton gradient across the mitochondrial membrane that is then used for ATP synthesis. This Grus nigricollis (Black-necked crane) protein is Cytochrome b (MT-CYB).